The chain runs to 465 residues: Ribulose bisphosphate carboxylase large chain (465 aa).

Lys4 is modified (N6,N6,N6-trimethyllysine). Residues Asn113 and Thr163 each contribute to the substrate site. Lys165 functions as the Proton acceptor in the catalytic mechanism. Substrate is bound at residue Lys167. Residues Lys191, Asp193, and Glu194 each coordinate Mg(2+). An N6-carboxylysine modification is found at Lys191. His284 acts as the Proton acceptor in catalysis. Residues Arg285, His317, and Ser369 each coordinate substrate.

This sequence belongs to the RuBisCO large chain family. Type I subfamily. As to quaternary structure, heterohexadecamer of 8 large chains and 8 small chains; disulfide-linked. The disulfide link is formed within the large subunit homodimers. It depends on Mg(2+) as a cofactor. In terms of processing, the disulfide bond which can form in the large chain dimeric partners within the hexadecamer appears to be associated with oxidative stress and protein turnover.

The protein resides in the plastid. Its subcellular location is the chloroplast. It catalyses the reaction 2 (2R)-3-phosphoglycerate + 2 H(+) = D-ribulose 1,5-bisphosphate + CO2 + H2O. The catalysed reaction is D-ribulose 1,5-bisphosphate + O2 = 2-phosphoglycolate + (2R)-3-phosphoglycerate + 2 H(+). Its function is as follows. RuBisCO catalyzes two reactions: the carboxylation of D-ribulose 1,5-bisphosphate, the primary event in carbon dioxide fixation, as well as the oxidative fragmentation of the pentose substrate in the photorespiration process. Both reactions occur simultaneously and in competition at the same active site. This is Ribulose bisphosphate carboxylase large chain from Ailanthus altissima (Tree-of-heaven).